Reading from the N-terminus, the 160-residue chain is Light-independent protochlorophyllide reductase iron-sulfur ATP-binding protein (160 aa).

ATP-binding positions include 15 to 20 and K44; that span reads GIGKST. S19 contacts Mg(2+). 2 residues coordinate [4Fe-4S] cluster: C100 and C134.

Belongs to the NifH/BchL/ChlL family. Homodimer. Protochlorophyllide reductase is composed of three subunits; ChlL, ChlN and ChlB. [4Fe-4S] cluster serves as cofactor.

It localises to the plastid. It is found in the chloroplast. The enzyme catalyses chlorophyllide a + oxidized 2[4Fe-4S]-[ferredoxin] + 2 ADP + 2 phosphate = protochlorophyllide a + reduced 2[4Fe-4S]-[ferredoxin] + 2 ATP + 2 H2O. Its pathway is porphyrin-containing compound metabolism; chlorophyll biosynthesis (light-independent). In terms of biological role, component of the dark-operative protochlorophyllide reductase (DPOR) that uses Mg-ATP and reduced ferredoxin to reduce ring D of protochlorophyllide (Pchlide) to form chlorophyllide a (Chlide). This reaction is light-independent. The L component serves as a unique electron donor to the NB-component of the complex, and binds Mg-ATP. The polypeptide is Light-independent protochlorophyllide reductase iron-sulfur ATP-binding protein (chlL) (Polystichum acrostichoides (Christmas fern)).